The chain runs to 308 residues: Sulfate adenylyltransferase subunit 2 (308 aa).

The disordered stretch occupies residues 286 to 308; it reads RQGRIIDHDGSASMEKKKQEGYF.

This sequence belongs to the PAPS reductase family. CysD subfamily. As to quaternary structure, heterodimer composed of CysD, the smaller subunit, and CysN.

It catalyses the reaction sulfate + ATP + H(+) = adenosine 5'-phosphosulfate + diphosphate. It functions in the pathway sulfur metabolism; hydrogen sulfide biosynthesis; sulfite from sulfate: step 1/3. Functionally, with CysN forms the ATP sulfurylase (ATPS) that catalyzes the adenylation of sulfate producing adenosine 5'-phosphosulfate (APS) and diphosphate, the first enzymatic step in sulfur assimilation pathway. APS synthesis involves the formation of a high-energy phosphoric-sulfuric acid anhydride bond driven by GTP hydrolysis by CysN coupled to ATP hydrolysis by CysD. The protein is Sulfate adenylyltransferase subunit 2 of Nocardia farcinica (strain IFM 10152).